The chain runs to 92 residues: Small ribosomal subunit protein uS19c (92 aa).

Belongs to the universal ribosomal protein uS19 family.

The protein localises to the plastid. Its subcellular location is the chloroplast. Functionally, protein S19 forms a complex with S13 that binds strongly to the 16S ribosomal RNA. This Nandina domestica (Heavenly bamboo) protein is Small ribosomal subunit protein uS19c.